A 228-amino-acid chain; its full sequence is LOB domain-containing protein 30 (228 aa).

The 103-residue stretch at 16-118 (GPCGACKFLR…TELSYLQAHL (103 aa)) folds into the LOB domain. The segment at 188-228 (SNMGGGGELQALAREFIHGGQMPAQPSPGTSGSASSVIKRE) is disordered. The segment covering 214 to 228 (SPGTSGSASSVIKRE) has biased composition (polar residues).

The protein belongs to the LOB domain-containing protein family. As to expression, expressed in roots, stems, leaves and flowers. Expressed in vascular tissues of hypocotyls, leaves, roots, developing floral organs and siliques.

Functionally, involved in the positive regulation of tracheary element (TE) differentiation. Involved in a positive feedback loop that maintains or promotes NAC030/VND7 expression that regulates TE differentiation-related genes. This Arabidopsis thaliana (Mouse-ear cress) protein is LOB domain-containing protein 30 (LBD30).